The chain runs to 1134 residues: Error-prone DNA polymerase (1134 aa).

The disordered stretch occupies residues 1 to 33 (MSYHNPPIPWRELEGRISGRPAPHGHQESHADQ).

This sequence belongs to the DNA polymerase type-C family. DnaE2 subfamily.

Its subcellular location is the cytoplasm. It catalyses the reaction DNA(n) + a 2'-deoxyribonucleoside 5'-triphosphate = DNA(n+1) + diphosphate. In terms of biological role, DNA polymerase involved in damage-induced mutagenesis and translesion synthesis (TLS). It is not the major replicative DNA polymerase. This Cutibacterium acnes (strain DSM 16379 / KPA171202) (Propionibacterium acnes) protein is Error-prone DNA polymerase.